The sequence spans 259 residues: Probable ABC transporter permease protein RBE_1340 (259 aa).

Helical transmembrane passes span 25–45, 49–69, 148–168, 195–215, and 237–257; these read IFSL…SLII, LFIG…SGAV, VIAA…IGVM, PIDV…ISII, and AVVN…ELFF.

Belongs to the MlaE permease family.

It localises to the cell inner membrane. Its function is as follows. Could be part of an ABC transporter complex. The protein is Probable ABC transporter permease protein RBE_1340 of Rickettsia bellii (strain RML369-C).